We begin with the raw amino-acid sequence, 355 residues long: Nuclear hormone receptor family member nhr-127 (355 aa).

The nuclear receptor DNA-binding region spans 10–86 (SIPCEVCKNQ…AGMKAEKIQK (77 aa)). 2 NR C4-type zinc fingers span residues 13–33 (CEVC…CGAC) and 49–69 (CKDG…CRYC). The NR LBD domain maps to 126–355 (NPHNASEGCS…IVQIVQNNFY (230 aa)).

It belongs to the nuclear hormone receptor family.

It is found in the nucleus. Functionally, orphan nuclear receptor. May play a role in modulation of lifespan and immunity. This chain is Nuclear hormone receptor family member nhr-127 (nhr-127), found in Caenorhabditis elegans.